The primary structure comprises 320 residues: Acetyl-coenzyme A carboxylase carboxyl transferase subunit beta (320 aa).

Residues 25–294 (LWRKCPECGT…AIVGDLPAPD (270 aa)) enclose the CoA carboxyltransferase N-terminal domain. The Zn(2+) site is built by cysteine 29, cysteine 32, cysteine 48, and cysteine 51. A C4-type zinc finger spans residues 29-51 (CPECGTMLFHRELSDNLFVCISC). The interval 290–320 (LPAPDPAPATPEPQKAAPSAPAQDKPGAGRS) is disordered.

The protein belongs to the AccD/PCCB family. Acetyl-CoA carboxylase is a heterohexamer composed of biotin carboxyl carrier protein (AccB), biotin carboxylase (AccC) and two subunits each of ACCase subunit alpha (AccA) and ACCase subunit beta (AccD). Zn(2+) is required as a cofactor.

The protein localises to the cytoplasm. It carries out the reaction N(6)-carboxybiotinyl-L-lysyl-[protein] + acetyl-CoA = N(6)-biotinyl-L-lysyl-[protein] + malonyl-CoA. Its pathway is lipid metabolism; malonyl-CoA biosynthesis; malonyl-CoA from acetyl-CoA: step 1/1. In terms of biological role, component of the acetyl coenzyme A carboxylase (ACC) complex. Biotin carboxylase (BC) catalyzes the carboxylation of biotin on its carrier protein (BCCP) and then the CO(2) group is transferred by the transcarboxylase to acetyl-CoA to form malonyl-CoA. This is Acetyl-coenzyme A carboxylase carboxyl transferase subunit beta from Dinoroseobacter shibae (strain DSM 16493 / NCIMB 14021 / DFL 12).